The primary structure comprises 102 residues: Large ribosomal subunit protein uL24 (102 aa).

Belongs to the universal ribosomal protein uL24 family. As to quaternary structure, part of the 50S ribosomal subunit.

In terms of biological role, one of two assembly initiator proteins, it binds directly to the 5'-end of the 23S rRNA, where it nucleates assembly of the 50S subunit. Its function is as follows. One of the proteins that surrounds the polypeptide exit tunnel on the outside of the subunit. This chain is Large ribosomal subunit protein uL24, found in Agrobacterium fabrum (strain C58 / ATCC 33970) (Agrobacterium tumefaciens (strain C58)).